We begin with the raw amino-acid sequence, 280 residues long: Type II restriction enzyme MboI (280 aa).

It belongs to the DpnII type II restriction endonuclease family.

The catalysed reaction is Endonucleolytic cleavage of DNA to give specific double-stranded fragments with terminal 5'-phosphates.. A P subtype restriction enzyme that recognizes the double-stranded unmethylated sequence 5'-GATC-3' and cleaves before G-1. The protein is Type II restriction enzyme MboI (mboIR) of Moraxella bovis.